A 122-amino-acid polypeptide reads, in one-letter code: Ribonuclease P protein component (122 aa).

The protein belongs to the RnpA family. In terms of assembly, consists of a catalytic RNA component (M1 or rnpB) and a protein subunit.

The catalysed reaction is Endonucleolytic cleavage of RNA, removing 5'-extranucleotides from tRNA precursor.. In terms of biological role, RNaseP catalyzes the removal of the 5'-leader sequence from pre-tRNA to produce the mature 5'-terminus. It can also cleave other RNA substrates such as 4.5S RNA. The protein component plays an auxiliary but essential role in vivo by binding to the 5'-leader sequence and broadening the substrate specificity of the ribozyme. The protein is Ribonuclease P protein component of Shouchella clausii (strain KSM-K16) (Alkalihalobacillus clausii).